The primary structure comprises 281 residues: NADPH-dependent 7-cyano-7-deazaguanine reductase (281 aa).

Residue 87–89 (VES) coordinates substrate. Residue 89–90 (SK) coordinates NADPH. The active-site Thioimide intermediate is Cys188. Residue Asp195 is the Proton donor of the active site. 227–228 (HE) contacts substrate. 256–257 (RG) serves as a coordination point for NADPH.

It belongs to the GTP cyclohydrolase I family. QueF type 2 subfamily. In terms of assembly, homodimer.

Its subcellular location is the cytoplasm. The enzyme catalyses 7-aminomethyl-7-carbaguanine + 2 NADP(+) = 7-cyano-7-deazaguanine + 2 NADPH + 3 H(+). It functions in the pathway tRNA modification; tRNA-queuosine biosynthesis. Catalyzes the NADPH-dependent reduction of 7-cyano-7-deazaguanine (preQ0) to 7-aminomethyl-7-deazaguanine (preQ1). The protein is NADPH-dependent 7-cyano-7-deazaguanine reductase of Aliivibrio fischeri (strain MJ11) (Vibrio fischeri).